A 383-amino-acid polypeptide reads, in one-letter code: tRNA-specific 2-thiouridylase MnmA (383 aa).

ATP contacts are provided by residues 29–36 and M55; that span reads GMSGGVDS. The segment at 115-117 is interaction with target base in tRNA; it reads NPD. Catalysis depends on C120, which acts as the Nucleophile. A disulfide bridge links C120 with C217. Residue G145 coordinates ATP. Residues 167-169 form an interaction with tRNA region; sequence KDQ. C217 serves as the catalytic Cysteine persulfide intermediate. The segment at 329–330 is interaction with tRNA; the sequence is RY.

The protein belongs to the MnmA/TRMU family.

The protein resides in the cytoplasm. It carries out the reaction S-sulfanyl-L-cysteinyl-[protein] + uridine(34) in tRNA + AH2 + ATP = 2-thiouridine(34) in tRNA + L-cysteinyl-[protein] + A + AMP + diphosphate + H(+). Functionally, catalyzes the 2-thiolation of uridine at the wobble position (U34) of tRNA, leading to the formation of s(2)U34. The protein is tRNA-specific 2-thiouridylase MnmA of Histophilus somni (strain 2336) (Haemophilus somnus).